The primary structure comprises 30 residues: DCPSDWSPYEGHCYRVFTEPQNWADAEKFC.

Residues cysteine 2 and cysteine 13 are joined by a disulfide bond. Residues 9–30 enclose the C-type lectin domain; sequence YEGHCYRVFTEPQNWADAEKFC.

The protein belongs to the snaclec family. As to quaternary structure, heterodimer of subunits A and B; disulfide-linked. Post-translationally, glycosylated. Expressed by the venom gland.

It is found in the secreted. In terms of biological role, anticoagulant protein which binds to the gamma-carboxyglutamic acid-domain regions of factors IX (F9) and factor X (F10) in the presence of calcium with a 1 to 1 stoichiometry. The protein is Snaclec coagulation factor IX/factor X-binding protein subunit B of Bothrops jararaca (Jararaca).